The chain runs to 926 residues: Up-regulator of cell proliferation (926 aa).

At Ser3 the chain carries Phosphoserine. A VLIG-type G domain is found at 689 to 924 (RSRLVVLSAL…NIQQLIELLR (236 aa)).

Belongs to the TRAFAC class dynamin-like GTPase superfamily. Very large inducible GTPase (VLIG) family.

It is found in the cytoplasm. The protein localises to the nucleus. May be involved in cell cycle progression through the regulation of cyclin D1 expression. This is Up-regulator of cell proliferation (Urgcp) from Mus musculus (Mouse).